Consider the following 251-residue polypeptide: MVNEQKRFALFLATSDSTFVKKAYGGYFNVFVSTFGEDGEQWDLFRVIDGEFPDDKDLDKYDGFVISGSLNDAFGDDDWIVKLCSLCQKLDDMKKKVLGICFGHQILSRIKGGKVGRASRGLDMGLRSITMVTDAVKPGGYFGSQIPKSLAIIKCHQDEVLELPESATLLAYSDKYNVEMCSYGNHLLGIQGHPEYNKEILFEIIDRVVNLKLMEQDFADKAKATMENAEPDRKQWQTLCKNFLKGRSEQV.

The region spanning 17–214 (STFVKKAYGG…IDRVVNLKLM (198 aa)) is the Glutamine amidotransferase type-1 domain. The active-site Nucleophile is Cys-101. Residues His-193 and Glu-195 contribute to the active site.

This sequence belongs to the peptidase C26 family.

The protein localises to the cytoplasm. Its subcellular location is the cytosol. It participates in secondary metabolite biosynthesis. Involved in glucosinolate biosynthesis. Hydrolyzes the gamma-glutamyl peptide bond of several glutathione (GSH) conjugates to produce Cys-Gly conjugates related to glucosinolates. The gamma-Glu-Cys-Gly-GSH conjugates are the sulfur-donating molecule in glucosinolate biosynthesis. In Arabidopsis thaliana (Mouse-ear cress), this protein is Gamma-glutamyl peptidase 5.